The chain runs to 160 residues: S-ribosylhomocysteine lyase (160 aa).

Fe cation contacts are provided by His57, His61, and Cys127.

This sequence belongs to the LuxS family. Homodimer. Fe cation serves as cofactor.

It carries out the reaction S-(5-deoxy-D-ribos-5-yl)-L-homocysteine = (S)-4,5-dihydroxypentane-2,3-dione + L-homocysteine. Its function is as follows. Involved in the synthesis of autoinducer 2 (AI-2) which is secreted by bacteria and is used to communicate both the cell density and the metabolic potential of the environment. The regulation of gene expression in response to changes in cell density is called quorum sensing. Catalyzes the transformation of S-ribosylhomocysteine (RHC) to homocysteine (HC) and 4,5-dihydroxy-2,3-pentadione (DPD). The protein is S-ribosylhomocysteine lyase of Streptococcus suis (strain 98HAH33).